A 366-amino-acid polypeptide reads, in one-letter code: UDP-N-acetylglucosamine--N-acetylmuramyl-(pentapeptide) pyrophosphoryl-undecaprenol N-acetylglucosamine transferase (366 aa).

UDP-N-acetyl-alpha-D-glucosamine contacts are provided by residues 15 to 17 (TGG), asparagine 127, arginine 175, serine 201, isoleucine 255, and glutamine 300.

This sequence belongs to the glycosyltransferase 28 family. MurG subfamily.

It is found in the cell inner membrane. The catalysed reaction is di-trans,octa-cis-undecaprenyl diphospho-N-acetyl-alpha-D-muramoyl-L-alanyl-D-glutamyl-meso-2,6-diaminopimeloyl-D-alanyl-D-alanine + UDP-N-acetyl-alpha-D-glucosamine = di-trans,octa-cis-undecaprenyl diphospho-[N-acetyl-alpha-D-glucosaminyl-(1-&gt;4)]-N-acetyl-alpha-D-muramoyl-L-alanyl-D-glutamyl-meso-2,6-diaminopimeloyl-D-alanyl-D-alanine + UDP + H(+). Its pathway is cell wall biogenesis; peptidoglycan biosynthesis. Functionally, cell wall formation. Catalyzes the transfer of a GlcNAc subunit on undecaprenyl-pyrophosphoryl-MurNAc-pentapeptide (lipid intermediate I) to form undecaprenyl-pyrophosphoryl-MurNAc-(pentapeptide)GlcNAc (lipid intermediate II). This Thiobacillus denitrificans (strain ATCC 25259 / T1) protein is UDP-N-acetylglucosamine--N-acetylmuramyl-(pentapeptide) pyrophosphoryl-undecaprenol N-acetylglucosamine transferase.